The chain runs to 547 residues: uncharacterized protein (547 aa).

Positions Met1–Ser37 are disordered. Positions Lys10–Lys21 are enriched in basic and acidic residues. A compositionally biased stretch (polar residues) spans Lys24–Ser37. 2 consecutive C3H1-type zinc fingers follow at residues Asn41–Leu67 and Glu68–Pro95. A disordered region spans residues Ser132–Gly176. Over residues Ala147 to Ser162 the composition is skewed to polar residues. Ser343 is subject to Phosphoserine. The residue at position 344 (Tyr344) is a Phosphotyrosine. Phosphoserine is present on residues Ser353, Ser355, Ser483, Ser489, Ser495, and Ser499. Thr502 is modified (phosphothreonine). Residues Val526–Thr536 are compositionally biased toward polar residues. Residues Val526–Asp547 are disordered. A compositionally biased stretch (acidic residues) spans Val537 to Asp547.

This is an uncharacterized protein from Schizosaccharomyces pombe (strain 972 / ATCC 24843) (Fission yeast).